Consider the following 727-residue polypeptide: Long-chain-fatty-acid--[acyl-carrier-protein] ligase AEE15, chloroplastic (727 aa).

The N-terminal 66 residues, 1–66 (MQIRLKPDYS…PSFRRFRVHC (66 aa)), are a transit peptide targeting the chloroplast.

This sequence belongs to the ATP-dependent AMP-binding enzyme family.

It is found in the plastid. It localises to the chloroplast. The enzyme catalyses a long-chain fatty acid + holo-[ACP] + ATP = a long-chain fatty acyl-[ACP] + AMP + diphosphate. Its function is as follows. Probably involved in the activation of fatty acids to acyl-carrier-protein prior to fatty acid elongation in plastids. Acts on medium- to long-chain fatty acids. This is Long-chain-fatty-acid--[acyl-carrier-protein] ligase AEE15, chloroplastic (AAE15) from Arabidopsis thaliana (Mouse-ear cress).